Here is a 228-residue protein sequence, read N- to C-terminus: MATWANLGLQDSSSPLMEQLNFFHDHTLLILTMITILVGYIMGMLMFNQFTNRYLLHGQTIEIIWTVLPAIILMFIALPSLRLLYLMDEINTPSITLKSVGHQWYWSYEYSDFLNLEFDSYMIPTNELETNGFRLLDVDNRVVLPVNNQIRILVTATDVLHSWTVPSLGVKVDATPGRLNQLNFLINRPGLFFGQCSEICGANHSFMPIVIESIPMNYFIKWITNMTN.

Topologically, residues 1-26 (MATWANLGLQDSSSPLMEQLNFFHDH) are mitochondrial intermembrane. A helical membrane pass occupies residues 27 to 47 (TLLILTMITILVGYIMGMLMF). The Mitochondrial matrix portion of the chain corresponds to 48 to 60 (NQFTNRYLLHGQT). A helical membrane pass occupies residues 61–81 (IEIIWTVLPAIILMFIALPSL). The Mitochondrial intermembrane portion of the chain corresponds to 82–228 (RLLYLMDEIN…FIKWITNMTN (147 aa)). The Cu cation site is built by histidine 161, cysteine 196, glutamate 198, cysteine 200, histidine 204, and methionine 207. Glutamate 198 contributes to the Mg(2+) binding site.

This sequence belongs to the cytochrome c oxidase subunit 2 family. As to quaternary structure, component of the cytochrome c oxidase (complex IV, CIV), a multisubunit enzyme composed of a catalytic core of 3 subunits and several supernumerary subunits. The complex exists as a monomer or a dimer and forms supercomplexes (SCs) in the inner mitochondrial membrane with ubiquinol-cytochrome c oxidoreductase (cytochrome b-c1 complex, complex III, CIII). Cu cation is required as a cofactor.

Its subcellular location is the mitochondrion inner membrane. The catalysed reaction is 4 Fe(II)-[cytochrome c] + O2 + 8 H(+)(in) = 4 Fe(III)-[cytochrome c] + 2 H2O + 4 H(+)(out). Functionally, component of the cytochrome c oxidase, the last enzyme in the mitochondrial electron transport chain which drives oxidative phosphorylation. The respiratory chain contains 3 multisubunit complexes succinate dehydrogenase (complex II, CII), ubiquinol-cytochrome c oxidoreductase (cytochrome b-c1 complex, complex III, CIII) and cytochrome c oxidase (complex IV, CIV), that cooperate to transfer electrons derived from NADH and succinate to molecular oxygen, creating an electrochemical gradient over the inner membrane that drives transmembrane transport and the ATP synthase. Cytochrome c oxidase is the component of the respiratory chain that catalyzes the reduction of oxygen to water. Electrons originating from reduced cytochrome c in the intermembrane space (IMS) are transferred via the dinuclear copper A center (CU(A)) of subunit 2 and heme A of subunit 1 to the active site in subunit 1, a binuclear center (BNC) formed by heme A3 and copper B (CU(B)). The BNC reduces molecular oxygen to 2 water molecules using 4 electrons from cytochrome c in the IMS and 4 protons from the mitochondrial matrix. This is Cytochrome c oxidase subunit 2 (COXII) from Anopheles quadrimaculatus (Common malaria mosquito).